The primary structure comprises 332 residues: Glycerol-3-phosphate dehydrogenase [NAD(P)+] (332 aa).

Residues serine 15, tryptophan 16, and lysine 110 each contribute to the NADPH site. Residues lysine 110, glycine 137, and serine 139 each coordinate sn-glycerol 3-phosphate. Alanine 141 lines the NADPH pocket. The sn-glycerol 3-phosphate site is built by lysine 192, aspartate 245, serine 255, arginine 256, and asparagine 257. Residue lysine 192 is the Proton acceptor of the active site. Arginine 256 serves as a coordination point for NADPH. Residue glutamate 282 coordinates NADPH.

Belongs to the NAD-dependent glycerol-3-phosphate dehydrogenase family.

The protein resides in the cytoplasm. The catalysed reaction is sn-glycerol 3-phosphate + NAD(+) = dihydroxyacetone phosphate + NADH + H(+). The enzyme catalyses sn-glycerol 3-phosphate + NADP(+) = dihydroxyacetone phosphate + NADPH + H(+). It functions in the pathway membrane lipid metabolism; glycerophospholipid metabolism. Functionally, catalyzes the reduction of the glycolytic intermediate dihydroxyacetone phosphate (DHAP) to sn-glycerol 3-phosphate (G3P), the key precursor for phospholipid synthesis. The sequence is that of Glycerol-3-phosphate dehydrogenase [NAD(P)+] from Coxiella burnetii (strain CbuK_Q154) (Coxiella burnetii (strain Q154)).